The following is a 147-amino-acid chain: Hemoglobin subunit beta (147 aa).

Val-2 carries the post-translational modification N-acetylvaline. One can recognise a Globin domain in the interval 3–147 (HLTGEEKAAV…VANALAHKYH (145 aa)). Residue Thr-13 is modified to Phosphothreonine. At Ser-45 the chain carries Phosphoserine. Position 60 is an N6-acetyllysine (Lys-60). Residue His-64 coordinates heme b. Lys-83 carries the post-translational modification N6-acetyllysine. His-93 contributes to the heme b binding site. At Cys-94 the chain carries S-nitrosocysteine. An N6-acetyllysine modification is found at Lys-145.

Belongs to the globin family. As to quaternary structure, heterotetramer of two alpha chains and two beta chains. Red blood cells.

In terms of biological role, involved in oxygen transport from the lung to the various peripheral tissues. The chain is Hemoglobin subunit beta (HBB) from Ailuropoda melanoleuca (Giant panda).